A 186-amino-acid chain; its full sequence is Peptide deformylase (186 aa).

Residues cysteine 94 and histidine 136 each contribute to the Fe cation site. Glutamate 137 is a catalytic residue. Histidine 140 serves as a coordination point for Fe cation.

This sequence belongs to the polypeptide deformylase family. Fe(2+) serves as cofactor.

It carries out the reaction N-terminal N-formyl-L-methionyl-[peptide] + H2O = N-terminal L-methionyl-[peptide] + formate. Functionally, removes the formyl group from the N-terminal Met of newly synthesized proteins. Requires at least a dipeptide for an efficient rate of reaction. N-terminal L-methionine is a prerequisite for activity but the enzyme has broad specificity at other positions. The chain is Peptide deformylase from Prosthecochloris aestuarii (strain DSM 271 / SK 413).